Here is a 539-residue protein sequence, read N- to C-terminus: CTP synthase (539 aa).

An amidoligase domain region spans residues 1–267 (MTKYIFVTGG…DQKVCDFLHI (267 aa)). Ser13 is a CTP binding site. Ser13 is a UTP binding site. 14–19 (SLGKGI) provides a ligand contact to ATP. Position 54 (Tyr54) interacts with L-glutamine. ATP is bound at residue Asp71. Mg(2+) contacts are provided by Asp71 and Glu141. CTP-binding positions include 148–150 (DME), 188–193 (KTKPTQ), and Lys224. UTP is bound by residues 188-193 (KTKPTQ) and Lys224. Positions 294-537 (KITLVGKYVE…IGAASGLPEQ (244 aa)) constitute a Glutamine amidotransferase type-1 domain. Residue Gly356 participates in L-glutamine binding. Cys383 functions as the Nucleophile; for glutamine hydrolysis in the catalytic mechanism. L-glutamine-binding positions include 384 to 387 (LGMQ), Glu407, and Arg465. Active-site residues include His510 and Glu512.

This sequence belongs to the CTP synthase family. Homotetramer.

The catalysed reaction is UTP + L-glutamine + ATP + H2O = CTP + L-glutamate + ADP + phosphate + 2 H(+). It carries out the reaction L-glutamine + H2O = L-glutamate + NH4(+). It catalyses the reaction UTP + NH4(+) + ATP = CTP + ADP + phosphate + 2 H(+). The protein operates within pyrimidine metabolism; CTP biosynthesis via de novo pathway; CTP from UDP: step 2/2. With respect to regulation, allosterically activated by GTP, when glutamine is the substrate; GTP has no effect on the reaction when ammonia is the substrate. The allosteric effector GTP functions by stabilizing the protein conformation that binds the tetrahedral intermediate(s) formed during glutamine hydrolysis. Inhibited by the product CTP, via allosteric rather than competitive inhibition. In terms of biological role, catalyzes the ATP-dependent amination of UTP to CTP with either L-glutamine or ammonia as the source of nitrogen. Regulates intracellular CTP levels through interactions with the four ribonucleotide triphosphates. The chain is CTP synthase from Lactobacillus helveticus (strain DPC 4571).